We begin with the raw amino-acid sequence, 368 residues long: Agmatine deiminase (368 aa).

C357 acts as the Amidino-cysteine intermediate in catalysis.

The protein belongs to the agmatine deiminase family. Homodimer.

The catalysed reaction is agmatine + H2O = N-carbamoylputrescine + NH4(+). It participates in amine and polyamine biosynthesis; putrescine biosynthesis via agmatine pathway; N-carbamoylputrescine from agmatine: step 1/1. Its function is as follows. Mediates the hydrolysis of agmatine into N-carbamoylputrescine in the arginine decarboxylase (ADC) pathway of putrescine biosynthesis, a basic polyamine. The chain is Agmatine deiminase from Pseudomonas putida (strain ATCC 47054 / DSM 6125 / CFBP 8728 / NCIMB 11950 / KT2440).